Here is a 736-residue protein sequence, read N- to C-terminus: Elongation factor 2 (736 aa).

A tr-type G domain is found at 18-234; it reads TRVRNIGIIA…VIDAYTASDK (217 aa). GTP contacts are provided by residues 27-34, 93-97, and 147-150; these read AHVDHGKT, DTPGH, and NKVD. Diphthamide is present on histidine 603.

This sequence belongs to the TRAFAC class translation factor GTPase superfamily. Classic translation factor GTPase family. EF-G/EF-2 subfamily.

It is found in the cytoplasm. Its function is as follows. Catalyzes the GTP-dependent ribosomal translocation step during translation elongation. During this step, the ribosome changes from the pre-translocational (PRE) to the post-translocational (POST) state as the newly formed A-site-bound peptidyl-tRNA and P-site-bound deacylated tRNA move to the P and E sites, respectively. Catalyzes the coordinated movement of the two tRNA molecules, the mRNA and conformational changes in the ribosome. The chain is Elongation factor 2 (fusA) from Saccharolobus solfataricus (strain ATCC 35092 / DSM 1617 / JCM 11322 / P2) (Sulfolobus solfataricus).